The following is a 101-amino-acid chain: Small ribosomal subunit protein uS17 (101 aa).

It belongs to the universal ribosomal protein uS17 family. Part of the 30S ribosomal subunit.

In terms of biological role, one of the primary rRNA binding proteins, it binds specifically to the 5'-end of 16S ribosomal RNA. The chain is Small ribosomal subunit protein uS17 from Leifsonia xyli subsp. xyli (strain CTCB07).